Consider the following 365-residue polypeptide: MAIVSSNAASQRPRPDRGPDRVPNRVVDGARQAEDDRDPGRVGAKEDSLRPKRLADYIGQRELKQVLGIAVQAAVGRGEALDHVLLYGPPGLGKTTMAMVLAEELGVTCRITSAPALERPRDIVGLLVTLQPKDLLFIDEIHRLSRVAEELLYPAMEDRRLDLTVGKGSTARTRALDLPPFTLVGATTRAGALSSPLRDRFGLIQRLEFYGLEDLQAIVERAAGLLDLDLSAAACTEIARRCRGTPRIANRLLRRVRDVACVRACAGRIDQALVDEALTLHRVDGRGLDASDRRLMELLLQSHGGGPAGLDTLAAALGEDPATLESVVEPYLLQLGFLQRTPRGRVVTAAGRGHLGWPYPQEQAA.

Positions 1-10 (MAIVSSNAAS) are enriched in polar residues. Positions 1-48 (MAIVSSNAASQRPRPDRGPDRVPNRVVDGARQAEDDRDPGRVGAKEDS) are disordered. 2 stretches are compositionally biased toward basic and acidic residues: residues 13–23 (PRPDRGPDRVP) and 31–48 (RQAE…KEDS). A large ATPase domain (RuvB-L) region spans residues 13-210 (PRPDRGPDRV…FGLIQRLEFY (198 aa)). Leu-49, Arg-50, Gly-91, Lys-94, Thr-95, Thr-96, Arg-200, Tyr-210, and Arg-247 together coordinate ATP. Thr-95 lines the Mg(2+) pocket. Positions 211–282 (GLEDLQAIVE…LVDEALTLHR (72 aa)) are small ATPAse domain (RuvB-S). The tract at residues 285–365 (GRGLDASDRR…GWPYPQEQAA (81 aa)) is head domain (RuvB-H). DNA contacts are provided by Arg-340 and Arg-345.

It belongs to the RuvB family. Homohexamer. Forms an RuvA(8)-RuvB(12)-Holliday junction (HJ) complex. HJ DNA is sandwiched between 2 RuvA tetramers; dsDNA enters through RuvA and exits via RuvB. An RuvB hexamer assembles on each DNA strand where it exits the tetramer. Each RuvB hexamer is contacted by two RuvA subunits (via domain III) on 2 adjacent RuvB subunits; this complex drives branch migration. In the full resolvosome a probable DNA-RuvA(4)-RuvB(12)-RuvC(2) complex forms which resolves the HJ.

The protein localises to the cytoplasm. It catalyses the reaction ATP + H2O = ADP + phosphate + H(+). Its function is as follows. The RuvA-RuvB-RuvC complex processes Holliday junction (HJ) DNA during genetic recombination and DNA repair, while the RuvA-RuvB complex plays an important role in the rescue of blocked DNA replication forks via replication fork reversal (RFR). RuvA specifically binds to HJ cruciform DNA, conferring on it an open structure. The RuvB hexamer acts as an ATP-dependent pump, pulling dsDNA into and through the RuvAB complex. RuvB forms 2 homohexamers on either side of HJ DNA bound by 1 or 2 RuvA tetramers; 4 subunits per hexamer contact DNA at a time. Coordinated motions by a converter formed by DNA-disengaged RuvB subunits stimulates ATP hydrolysis and nucleotide exchange. Immobilization of the converter enables RuvB to convert the ATP-contained energy into a lever motion, pulling 2 nucleotides of DNA out of the RuvA tetramer per ATP hydrolyzed, thus driving DNA branch migration. The RuvB motors rotate together with the DNA substrate, which together with the progressing nucleotide cycle form the mechanistic basis for DNA recombination by continuous HJ branch migration. Branch migration allows RuvC to scan DNA until it finds its consensus sequence, where it cleaves and resolves cruciform DNA. The protein is Holliday junction branch migration complex subunit RuvB of Synechococcus sp. (strain WH7803).